The chain runs to 197 residues: Ribosome biogenesis protein RLP24 (197 aa).

Residues 144–197 (QAERAAAGVDEDAEMGDSDEEMEDASEEESEEEEQQQQKIVLKNKKRSAKKIAF) are disordered. The segment covering 152–178 (VDEDAEMGDSDEEMEDASEEESEEEEQ) has biased composition (acidic residues). Over residues 185 to 197 (LKNKKRSAKKIAF) the composition is skewed to basic residues.

Belongs to the eukaryotic ribosomal protein eL24 family. As to quaternary structure, associated with nucleolar and cytoplasmic pre-60S particles. At the end of biogenesis it dissociates from cytoplasmic pre-60S particles and is likely to be exchanged for its ribosomal homolog, RPL24.

Its subcellular location is the cytoplasm. It is found in the nucleus. Its function is as follows. Involved in the biogenesis of the 60S ribosomal subunit. Ensures the docking of NOG1 to pre-60S particles. Activates and recruits ATPase AFG2 to cytoplasmic pre-60S ribosomal particles. This Eremothecium gossypii (strain ATCC 10895 / CBS 109.51 / FGSC 9923 / NRRL Y-1056) (Yeast) protein is Ribosome biogenesis protein RLP24 (RLP24).